The primary structure comprises 147 residues: Truncated RecQ DNA helicase-like protein C212.06c (147 aa).

Residues 1 to 72 (MGVRLVVHYR…CVRSFLASEM (72 aa)) enclose the Helicase C-terminal domain. A disordered region spans residues 100–147 (ETPKPAIATHSRYNASFSSSPPPQPGSSSGMSAMNTNTTSTTPVSGKT). Residues 125–141 (GSSSGMSAMNTNTTSTT) show a composition bias toward low complexity.

It belongs to the helicase family. RecQ subfamily.

Its function is as follows. Truncated ATP-dependent 3'-5' DNA helicase. The protein is Truncated RecQ DNA helicase-like protein C212.06c of Schizosaccharomyces pombe (strain 972 / ATCC 24843) (Fission yeast).